Reading from the N-terminus, the 3685-residue chain is Dystrophin (3685 aa).

The interval 1–240 (MLWWEEVEDC…YITSLFQVLP (240 aa)) is actin-binding. Calponin-homology (CH) domains lie at 15–119 (DVQK…LHWQ) and 134–240 (TNSE…QVLP). Residues 63 to 72 (PKEKGSTRVH) form an ANK2- and ANK-3 binding region. Spectrin repeat units lie at residues 339-447 (VNLD…NLHR), 448-556 (VLMD…LLQD), 559-667 (LKWQ…QISQ), 719-828 (EIRK…WLEY), 830-934 (NNII…ELQT), 943-1045 (RYQE…KLEE), 1048-1154 (NKLR…ALKG), 1157-1263 (EKTV…TLEE), 1266-1367 (ACWH…LLEQ), 1368-1463 (SIQS…LFQK), 1468-1568 (EQRL…QLEK), 1571-1676 (KLSR…LLLE), 1679-1778 (KHME…KASI), 1779-1874 (PLKE…KALE), 1877-1979 (HQWY…TVRE), 1992-2101 (EISY…RFDR), 2104-2208 (EKWR…RLEE), 2211-2318 (NILS…EIEA), 2319-2423 (QIKD…LRAK), 2475-2577 (FNRA…QLNE), 2580-2686 (KDST…ALEE), 2689-2802 (RLLQ…HLEA), 2808-2930 (KRLH…RKID), and 2935-3040 (RLRE…QLHE). Asn340 is modified (phosphothreonine). Phosphoserine is present on residues Tyr344 and Leu348. Phosphothreonine occurs at positions 519, 616, and 629. The tract at residues 1415-1913 (SDLTSHEISL…PEPRDERKIK (499 aa)) is interaction with SYNM. In terms of domain architecture, WW spans 3055-3088 (TSVQGPWERAISPNKVPYYINHETQTTCWDHPKM). Residues 3058–3408 (QGPWERAISP…TVLEGDNMET (351 aa)) form an interaction with SYNM region. The ZZ-type; degenerate zinc finger occupies 3308 to 3364 (KHQAKCNICKECPIIGFRYRSLKHFNYDICQSCFFSGRVAKGHKMHYPMVEYCTPTT). Zn(2+) is bound by residues Cys3313, Cys3316, Cys3337, and Cys3340. The segment at 3466–3518 (DDEHLLIQHYCQSLNQDSPLSQPRSPAQILISLESEERGELERILADLEEENR) is binds to SNTB1. 3 positions are modified to phosphoserine: Ser3483, Ser3490, and Ser3500. 2 disordered regions span residues 3528 to 3554 (KQQH…QSPR) and 3603 to 3685 (EAKV…EDTM). 2 stretches are compositionally biased toward polar residues: residues 3607-3626 (NGTT…SSQP) and 3662-3673 (QLNNSFPSSRGR). A phosphoserine mark is found at Ser3612, Ser3613, Ser3617, Ser3623, Ser3624, and Ser3666.

As to quaternary structure, interacts with SYNM. Interacts with the syntrophins SNTA1, SNTB1, SNTB2, SNTG1 and SNTG2. Interacts with KRT19. Component of the dystrophin-associated glycoprotein complex which is composed of three subcomplexes: a cytoplasmic complex comprised of DMD (or UTRN), DTNA and a number of syntrophins, such as SNTB1, SNTB2, SNTG1 and SNTG2, the transmembrane dystroglycan complex, and the sarcoglycan-sarcospan complex. Interacts with DAG1 (betaDAG1) with DMD; the interaction is inhibited by phosphorylation on the PPXY motif of DAG1. Interacts with CMYA5. Directly interacts with ANK2 and ANK3; these interactions do not interfere with betaDAG1-binding and are necessary for proper localization in muscle cells. Identified in a dystroglycan complex that contains at least PRX, DRP2, UTRN, DMD and DAG1. Interacts with DTNB. Interacts with PGM5; the interaction is direct. Interacts with NOS1; localizes NOS1 to sarcolemma in muscle cells. Expressed in muscle fibers accumulating in the costameres of myoplasm at the sarcolemma. Expressed in brain, muscle, kidney, lung and testis. Most tissues contain transcripts of multiple isoforms. Isoform 15: Only isoform to be detected in heart and liver and is also expressed in brain, testis and hepatoma cells.

The protein localises to the cell membrane. It is found in the sarcolemma. It localises to the cytoplasm. The protein resides in the cytoskeleton. Its subcellular location is the postsynaptic cell membrane. In terms of biological role, anchors the extracellular matrix to the cytoskeleton via F-actin. Ligand for dystroglycan. Component of the dystrophin-associated glycoprotein complex which accumulates at the neuromuscular junction (NMJ) and at a variety of synapses in the peripheral and central nervous systems and has a structural function in stabilizing the sarcolemma. Also implicated in signaling events and synaptic transmission. This chain is Dystrophin, found in Homo sapiens (Human).